Consider the following 40-residue polypeptide: Photosystem II reaction center protein J (40 aa).

Residues Ile-8–Phe-28 form a helical membrane-spanning segment.

The protein belongs to the PsbJ family. PSII is composed of 1 copy each of membrane proteins PsbA, PsbB, PsbC, PsbD, PsbE, PsbF, PsbH, PsbI, PsbJ, PsbK, PsbL, PsbM, PsbT, PsbX, PsbY, PsbZ, Psb30/Ycf12, at least 3 peripheral proteins of the oxygen-evolving complex and a large number of cofactors. It forms dimeric complexes.

Its subcellular location is the plastid. The protein resides in the chloroplast thylakoid membrane. Its function is as follows. One of the components of the core complex of photosystem II (PSII). PSII is a light-driven water:plastoquinone oxidoreductase that uses light energy to abstract electrons from H(2)O, generating O(2) and a proton gradient subsequently used for ATP formation. It consists of a core antenna complex that captures photons, and an electron transfer chain that converts photonic excitation into a charge separation. In Aethionema grandiflorum (Persian stone-cress), this protein is Photosystem II reaction center protein J.